A 959-amino-acid polypeptide reads, in one-letter code: Isoleucine--tRNA ligase (959 aa).

The 'HIGH' region motif lies at 66-76 (PYANGDIHIGH). Glu-592 lines the L-isoleucyl-5'-AMP pocket. A 'KMSKS' region motif is present at residues 633–637 (KMSKS). Lys-636 is a binding site for ATP. 4 residues coordinate Zn(2+): Cys-922, Cys-925, Cys-942, and Cys-945.

Belongs to the class-I aminoacyl-tRNA synthetase family. IleS type 1 subfamily. Monomer. It depends on Zn(2+) as a cofactor.

The protein resides in the cytoplasm. The catalysed reaction is tRNA(Ile) + L-isoleucine + ATP = L-isoleucyl-tRNA(Ile) + AMP + diphosphate. In terms of biological role, catalyzes the attachment of isoleucine to tRNA(Ile). As IleRS can inadvertently accommodate and process structurally similar amino acids such as valine, to avoid such errors it has two additional distinct tRNA(Ile)-dependent editing activities. One activity is designated as 'pretransfer' editing and involves the hydrolysis of activated Val-AMP. The other activity is designated 'posttransfer' editing and involves deacylation of mischarged Val-tRNA(Ile). This Cupriavidus metallidurans (strain ATCC 43123 / DSM 2839 / NBRC 102507 / CH34) (Ralstonia metallidurans) protein is Isoleucine--tRNA ligase.